The primary structure comprises 320 residues: Methionyl-tRNA formyltransferase (320 aa).

114–117 contacts (6S)-5,6,7,8-tetrahydrofolate; it reads SLLP.

This sequence belongs to the Fmt family.

It catalyses the reaction L-methionyl-tRNA(fMet) + (6R)-10-formyltetrahydrofolate = N-formyl-L-methionyl-tRNA(fMet) + (6S)-5,6,7,8-tetrahydrofolate + H(+). Attaches a formyl group to the free amino group of methionyl-tRNA(fMet). The formyl group appears to play a dual role in the initiator identity of N-formylmethionyl-tRNA by promoting its recognition by IF2 and preventing the misappropriation of this tRNA by the elongation apparatus. This is Methionyl-tRNA formyltransferase from Acinetobacter baumannii (strain AB0057).